We begin with the raw amino-acid sequence, 369 residues long: MESTKIAPSFDRASELKAFDETKTGVKGLVDSGISKIPRIFHHSSVELANPKPLPSDLLHLKTIPTIDLGGRDFQDAIKHKNAIEGIKEAAAKWGFFQVINHGVSLELLEKMKDGVRDFHEQPPEVRKDLYSRDFGRKFIYLSNFDLYTAAAANWRDTFYCYMAPDPPEPQDLPEICRDVMMEYSKQVMILGEFLFELLSEALGLNPNHLKDMECLKGLRMLCHYFPPCPEPDLTFGTSKHSDGSFLTVLLPDNIEGLQVCREGYWFDVPHVPGALIINIGDLLQLITNDKFISLKHRVLANRATRARVSVACFFHTHVKPNPRVYGPIKELVSEENPPKYRETTIRDYATYFNGKGLGGTSALLDFKV.

In terms of domain architecture, Fe2OG dioxygenase spans 217-318; the sequence is KGLRMLCHYF…VSVACFFHTH (102 aa). The Fe cation site is built by histidine 241, aspartate 243, and histidine 297.

This sequence belongs to the iron/ascorbate-dependent oxidoreductase family. Fe cation is required as a cofactor.

This Arabidopsis thaliana (Mouse-ear cress) protein is 1-aminocyclopropane-1-carboxylate oxidase homolog 2.